A 63-amino-acid polypeptide reads, in one-letter code: Large ribosomal subunit protein uL29 (63 aa).

Belongs to the universal ribosomal protein uL29 family.

This is Large ribosomal subunit protein uL29 from Shigella dysenteriae serotype 1 (strain Sd197).